We begin with the raw amino-acid sequence, 291 residues long: Ribosomal RNA small subunit methyltransferase H (291 aa).

S-adenosyl-L-methionine-binding positions include 31 to 33 (GGY), aspartate 49, phenylalanine 76, aspartate 97, and glutamine 104.

Belongs to the methyltransferase superfamily. RsmH family.

Its subcellular location is the cytoplasm. It carries out the reaction cytidine(1402) in 16S rRNA + S-adenosyl-L-methionine = N(4)-methylcytidine(1402) in 16S rRNA + S-adenosyl-L-homocysteine + H(+). Specifically methylates the N4 position of cytidine in position 1402 (C1402) of 16S rRNA. In Anaplasma marginale (strain Florida), this protein is Ribosomal RNA small subunit methyltransferase H.